A 412-amino-acid chain; its full sequence is MTLQKAQAERIEKEIRELSRFSAEGPGVTRLTYTPEHAAARETLIAAMKAAALSVREDALGNIIGRREGTDPELPAIAVGSHFDSVRNGGMFDGTAGVVCALEAARVMLENGYVNRHPFEFIAIVEEEGARFSSGMLGGRAIAGLVADRELDSLVDEDGVSVRQAATAFGLKPGELQAAARSAADLRAFIELHIEQGPILEQEQIEIGVVTSIVGVRALRVAVKGRSDHAGTTPMHLRQDALVPAALMVREVNRFVNEIADGTVATVGHLTVAPGGGNQVPGEVDFTLDLRSPHEESLRVLIDRISVMVGEVASQAGVAADVDEFFNLSPVQLAPTMVDAVREAASALQFTHRDISSGAGHDSMFIAQVTDVGMVFVPSRAGRSHVPEEWTDFDDLRKGTEVVLRVMKALDR.

A divalent metal cation contacts are provided by histidine 82, aspartate 93, glutamate 128, and histidine 193. An N-carbamoyl-L-alpha-amino acid contacts are provided by glutamine 196, histidine 229, asparagine 278, arginine 291, and glycine 360. Residues 212–330 (SIVGVRALRV…DVDEFFNLSP (119 aa)) form an involved in dimerization region. Residue histidine 385 coordinates a divalent metal cation.

This sequence belongs to the peptidase M20 family. As to quaternary structure, homodimer. The cofactor is Mn(2+). Ni(2+) is required as a cofactor. Requires Co(2+) as cofactor. Fe(2+) serves as cofactor.

It catalyses the reaction an N-carbamoyl-L-alpha-amino acid + H2O + 2 H(+) = an L-alpha-amino acid + NH4(+) + CO2. The catalysed reaction is N-carbamoyl-L-tryptophan + H2O + 2 H(+) = L-tryptophan + NH4(+) + CO2. It carries out the reaction N-carbamoyl-L-tyrosine + H2O + 2 H(+) = L-tyrosine + NH4(+) + CO2. The enzyme catalyses N-carbamoyl-L-phenylalanine + H2O + 2 H(+) = L-phenylalanine + NH4(+) + CO2. Functionally, catalyzes the hydrolysis of aliphatic N-carbamoyl-L-alpha-amino acids to free L-alpha-amino acids. Is strictly L-specific since it is inactive toward N-carbamoyl-D-alpha-amino acids. Shows a preference for aromatic N-carbamoyl-L-alpha-amino acids, such as N-carbamoyl-L-tryptophan and N-carbamoyl-L-tyrosine and, to a lesser extent, N-carbamoyl-L-phenylalanine and the non-natural amino acid N-carbamoyl-L-thienylalanine. Carbamoyl derivatives of beta-alanine and charged aliphatic amino acids are not accepted as substrates. In Paenarthrobacter aurescens (Arthrobacter aurescens), this protein is N-carbamoyl-L-amino-acid amidohydrolase.